The following is a 331-amino-acid chain: Phosphoribosylformylglycinamidine cyclo-ligase (331 aa).

The protein belongs to the AIR synthase family.

The protein resides in the cytoplasm. It catalyses the reaction 2-formamido-N(1)-(5-O-phospho-beta-D-ribosyl)acetamidine + ATP = 5-amino-1-(5-phospho-beta-D-ribosyl)imidazole + ADP + phosphate + H(+). It participates in purine metabolism; IMP biosynthesis via de novo pathway; 5-amino-1-(5-phospho-D-ribosyl)imidazole from N(2)-formyl-N(1)-(5-phospho-D-ribosyl)glycinamide: step 2/2. This is Phosphoribosylformylglycinamidine cyclo-ligase from Clostridium botulinum (strain Okra / Type B1).